We begin with the raw amino-acid sequence, 379 residues long: DNA replication and repair protein RecF (379 aa).

34–41 lines the ATP pocket; that stretch reads GDNGAGKT.

The protein belongs to the RecF family.

It localises to the cytoplasm. Its function is as follows. The RecF protein is involved in DNA metabolism; it is required for DNA replication and normal SOS inducibility. RecF binds preferentially to single-stranded, linear DNA. It also seems to bind ATP. This Mesorhizobium japonicum (strain LMG 29417 / CECT 9101 / MAFF 303099) (Mesorhizobium loti (strain MAFF 303099)) protein is DNA replication and repair protein RecF.